Reading from the N-terminus, the 207-residue chain is Recombination protein RecR (207 aa).

Residues 62–77 (CSRCNTFTEQDVCETC) form a C4-type zinc finger. The region spanning 85–184 (SVLCVVETPA…KVSRLARGVP (100 aa)) is the Toprim domain.

Belongs to the RecR family.

In terms of biological role, may play a role in DNA repair. It seems to be involved in an RecBC-independent recombinational process of DNA repair. It may act with RecF and RecO. The chain is Recombination protein RecR from Ralstonia nicotianae (strain ATCC BAA-1114 / GMI1000) (Ralstonia solanacearum).